Consider the following 126-residue polypeptide: Precursor of CEP2 (126 aa).

The signal sequence occupies residues M1–D19. Residues K20–N80 constitute a propeptide that is removed on maturation. A hydroxyproline mark is found at P84 and P87. A propeptide spanning residues P96–N105 is cleaved from the precursor. Hydroxyproline is present on residues P109, P112, and P116. Positions P121–V126 are excised as a propeptide.

The protein belongs to the C-terminally encoded plant signaling peptide (CEP) family. Interacts with CEP receptors (e.g. CEPR1 and CEPR2). In terms of processing, the mature small signaling peptide is generated by proteolytic processing of the longer precursor. In terms of tissue distribution, mostly expressed in roots. Present in cotyledons, shoot apical meristem (SAM), leaves, inflorescence stems and flowers.

The protein resides in the secreted. It localises to the extracellular space. It is found in the apoplast. Extracellular signaling peptide that represses primary root growth rate. Negatively regulates the number of leaves and flowering, and modulates leaf morphology. Regulates systemic nitrogen (N)-demand signaling. Mediates up-regulation of genes involved in N uptake and assimilation pathways. This Arabidopsis thaliana (Mouse-ear cress) protein is Precursor of CEP2.